Here is a 292-residue protein sequence, read N- to C-terminus: ATP synthase gamma chain (292 aa).

It belongs to the ATPase gamma chain family. As to quaternary structure, F-type ATPases have 2 components, CF(1) - the catalytic core - and CF(0) - the membrane proton channel. CF(1) has five subunits: alpha(3), beta(3), gamma(1), delta(1), epsilon(1). CF(0) has three main subunits: a, b and c.

Its subcellular location is the cell membrane. Produces ATP from ADP in the presence of a proton gradient across the membrane. The gamma chain is believed to be important in regulating ATPase activity and the flow of protons through the CF(0) complex. The protein is ATP synthase gamma chain of Streptococcus suis (strain 05ZYH33).